The chain runs to 297 residues: Acetyl-coenzyme A carboxylase carboxyl transferase subunit beta (297 aa).

The region spanning 27–296 is the CoA carboxyltransferase N-terminal domain; it reads LWHKCPSCEA…PEQAREAAAV (270 aa). Zn(2+) is bound by residues Cys31, Cys34, Cys50, and Cys53. A C4-type zinc finger spans residues 31–53; it reads CPSCEAVLYRPELEKTLDVCPKC.

The protein belongs to the AccD/PCCB family. In terms of assembly, acetyl-CoA carboxylase is a heterohexamer composed of biotin carboxyl carrier protein (AccB), biotin carboxylase (AccC) and two subunits each of ACCase subunit alpha (AccA) and ACCase subunit beta (AccD). The cofactor is Zn(2+).

The protein localises to the cytoplasm. The enzyme catalyses N(6)-carboxybiotinyl-L-lysyl-[protein] + acetyl-CoA = N(6)-biotinyl-L-lysyl-[protein] + malonyl-CoA. It functions in the pathway lipid metabolism; malonyl-CoA biosynthesis; malonyl-CoA from acetyl-CoA: step 1/1. In terms of biological role, component of the acetyl coenzyme A carboxylase (ACC) complex. Biotin carboxylase (BC) catalyzes the carboxylation of biotin on its carrier protein (BCCP) and then the CO(2) group is transferred by the transcarboxylase to acetyl-CoA to form malonyl-CoA. The polypeptide is Acetyl-coenzyme A carboxylase carboxyl transferase subunit beta (Pseudomonas putida (strain GB-1)).